Here is a 1099-residue protein sequence, read N- to C-terminus: MESKSLNTLALRCAARKIPASEFLNLYKEFYNETFPANSIDNDDAKTQEGSGSQDKTDVEESISKPVGSKNDPVAILCAEFMKLLENGKYVILADYVVEVLFVNYHSELVREFLPKLKDLMNKGILIHFFSKSCAFFVNLTDNLVISQLIKDLRATIVPCILETNFCDISNELVVAIAKFLQAVLRFTPQPIQINSETYRDNTFNLTKRLSLINKILSKKFAGIIDKKLQFKEVLGPFTKDSTLDFDNSPSITSPQFIPSPLPSMKERSVTSSQSAIKYKDLKLLRYYKNIWLNSKLMNWQPFDSEFISNYSAIKSSLYPDQVQNIQNVDLLFTDLIETAFTCFAQFVSNKLYHQSNSTYNLLERKWILFLSKILPLLVYKNSSRTAHVIGNALDGIDDKVIKAISAYYQENDDGRSRNDDLFDDYPSTSLDIRHDFIKSLTMLGVVPPVFITNYLRGDQTVDSKALATTDDLTFTNQQGIIEIVNDIPNFIRSSLEGMEMENVSEPTLVSSNGLLQVLSNFDTVSPTKQFELANAIVDMLSESSTTFELNTFVKLTAVLTFNYSHSLTSILMYVTPEVLTKLYLEFVDKHWNSQVIGKQETDGESQFENVNISMSFSWAILMLTILYKQYHIDFVSMRADYTTDNIKNSFAITFVENLPDISDLFFIDEKNSDDPEVQVKSHKLVRDWLNDLFVNGSLSDSLLQNIEPKQLAILVPYIFKQVTLAMEIGAVGDLQNLIGGFEYFLQPFMLVGLIKVMYWLEQYLSCLKSDETDEKLIQKVLSLLNTIICPSTLNEDSKAFHFAVLRLNAIPLLGILYQFRSNKHAESNYGIYSSDNEGNPTLELMISRLISSLSISPVYDIDSTILVTDNNFVQKPPKFQSFFVTNEISMNKMLTNQMNSFWSLHSSTYYNLDFLKTLIDTLTPKQFLLDVLRTLEYKVETLGVKDVRNKSSSNESDQVIDYLFYFLVLYDIENSEDAKAMAQFMEDTVDISINGDSGIVKQETQPKSEYNPDDDIDMLFGENDTSMQANEEDTLDNKELKSDRNCALGKNRHTFGFIIHEIKLSYGTLESDSMSYEDYKKICEYHSRYLKMLKTCIF.

The disordered stretch occupies residues 41–66 (DNDDAKTQEGSGSQDKTDVEESISKP).

This sequence belongs to the Mediator complex subunit 5 family. In terms of assembly, component of the Mediator complex.

The protein localises to the nucleus. Component of the Mediator complex, a coactivator involved in the regulated transcription of nearly all RNA polymerase II-dependent genes. Mediator functions as a bridge to convey information from gene-specific regulatory proteins to the basal RNA polymerase II transcription machinery. Mediator is recruited to promoters by direct interactions with regulatory proteins and serves as a scaffold for the assembly of a functional preinitiation complex with RNA polymerase II and the general transcription factors. In Candida glabrata (strain ATCC 2001 / BCRC 20586 / JCM 3761 / NBRC 0622 / NRRL Y-65 / CBS 138) (Yeast), this protein is Mediator of RNA polymerase II transcription subunit 5 (NUT1).